The chain runs to 367 residues: Anhydro-N-acetylmuramic acid kinase (367 aa).

13-20 (GTSMDGAD) is a binding site for ATP.

Belongs to the anhydro-N-acetylmuramic acid kinase family.

The enzyme catalyses 1,6-anhydro-N-acetyl-beta-muramate + ATP + H2O = N-acetyl-D-muramate 6-phosphate + ADP + H(+). It participates in amino-sugar metabolism; 1,6-anhydro-N-acetylmuramate degradation. The protein operates within cell wall biogenesis; peptidoglycan recycling. Catalyzes the specific phosphorylation of 1,6-anhydro-N-acetylmuramic acid (anhMurNAc) with the simultaneous cleavage of the 1,6-anhydro ring, generating MurNAc-6-P. Is required for the utilization of anhMurNAc either imported from the medium or derived from its own cell wall murein, and thus plays a role in cell wall recycling. The sequence is that of Anhydro-N-acetylmuramic acid kinase from Neisseria meningitidis serogroup A / serotype 4A (strain DSM 15465 / Z2491).